A 328-amino-acid chain; its full sequence is Malate dehydrogenase (328 aa).

12-18 is a binding site for NAD(+); that stretch reads GAAGQIG. Residues Arg-95 and Arg-101 each coordinate substrate. Residues Asn-108, Gln-115, and 132-134 each bind NAD(+); that span reads VGN. 2 residues coordinate substrate: Asn-134 and Arg-165. His-190 functions as the Proton acceptor in the catalytic mechanism.

Belongs to the LDH/MDH superfamily. MDH type 2 family.

The catalysed reaction is (S)-malate + NAD(+) = oxaloacetate + NADH + H(+). Functionally, catalyzes the reversible oxidation of malate to oxaloacetate. This is Malate dehydrogenase from Leptothrix cholodnii (strain ATCC 51168 / LMG 8142 / SP-6) (Leptothrix discophora (strain SP-6)).